Reading from the N-terminus, the 238-residue chain is Isoamyl acetate-hydrolyzing esterase (238 aa).

The Nucleophile role is filled by Ser12. Residue Asp187 is the Proton donor of the active site. Residue His190 is the Proton acceptor of the active site.

This sequence belongs to the 'GDSL' lipolytic enzyme family. IAH1 subfamily. As to quaternary structure, homodimer.

The catalysed reaction is 3-methylbutyl acetate + H2O = 3-methylbutanol + acetate + H(+). Plays a crucial role in the hydrolysis of isoamyl acetate in sake mash. Hydrolyzes short chain esters from acetate (C2) to hexanoate (C6), showing more specificity for shorter chain exters. No activity for decanoate (C10) esters. This chain is Isoamyl acetate-hydrolyzing esterase, found in Saccharomyces cerevisiae (strain ATCC 204508 / S288c) (Baker's yeast).